A 652-amino-acid polypeptide reads, in one-letter code: DNA ligase (652 aa).

Residues 29–33, 78–79, and Glu-107 contribute to the NAD(+) site; these read DQEYD and SL. Lys-109 (N6-AMP-lysine intermediate) is an active-site residue. Residues Arg-130, Glu-164, Lys-278, and Lys-302 each contribute to the NAD(+) site. Zn(2+) is bound by residues Cys-395, Cys-398, Cys-413, and Cys-418. The BRCT domain occupies 577–652; the sequence is DTSAQLFGLT…VKDENWLLQL (76 aa).

Belongs to the NAD-dependent DNA ligase family. LigA subfamily. Mg(2+) serves as cofactor. Mn(2+) is required as a cofactor.

The enzyme catalyses NAD(+) + (deoxyribonucleotide)n-3'-hydroxyl + 5'-phospho-(deoxyribonucleotide)m = (deoxyribonucleotide)n+m + AMP + beta-nicotinamide D-nucleotide.. DNA ligase that catalyzes the formation of phosphodiester linkages between 5'-phosphoryl and 3'-hydroxyl groups in double-stranded DNA using NAD as a coenzyme and as the energy source for the reaction. It is essential for DNA replication and repair of damaged DNA. This Streptococcus uberis (strain ATCC BAA-854 / 0140J) protein is DNA ligase.